Here is a 1067-residue protein sequence, read N- to C-terminus: MASPTSTNPAHAHFESFLQAQLCQDVLSSFQELCGALGLEPGGGLPQYHKIKDQLNYWSAKSLWTKLDKRAGQPVYQQGRACTSTKCLVVGAGPCGLRVAVELALLGARVVLVEKRTKFSRHNVLHLWPFTIHDLRALGAKKFYGRFCTGTLDHISIRQLQLLLLKVALLLGVEIHWGVTFTGLQPPPRKGSGWRAQLQPNPPAQLANYEFDVLISAAGGKFVPEGFKVREMRGKLAIGITANFVNGRTVEETQVPEISGVARIYNQSFFQSLLKATGIDLENIVYYKDDTHYFVMTAKKQCLLRLGVLRQDWPDTNRLLGSANVVPEALQRFTRAAADFATHGKLGKLEFAQDAHGQPDVSAFDFTSMMRAESSARVQEKHGARLLLGLVGDCLVEPFWPLGTGVARGFLAAFDAAWMVKRWAEGAESLEVLAERESLYQLLSQTSPENMHRNVAQYGLDPATRYPNLNLRAVTPNQVRDLYDVLAKEPVQRNNDKTDTGMPATGSAGTQEELLRWCQEQTAGYPGVHVSDLSSSWADGLALCALVYRLQPGLLEPSELQGLGALEATAWALKVAENELGITPVVSAQAVVAGSDPLGLIAYLSHFHSAFKSMAHSPGPVSQASPGTSSAVLFLSKLQRTLQRSRAKENAEDAGGKKLRLEMEAETPSTEVPPDPEPGVPLTPPSQHQEAGAGDLCALCGEHLYVLERLCVNGHFFHRSCFRCHTCEATLWPGGYEQHPGDGHFYCLQHLPQTDHKAEGSDRGPESPELPTPSENSMPPGLSTPTASQEGAGPVPDPSQPTRRQIRLSSPERQRLSSLNLTPDPEMEPPPKPPRSCSALARHALESSFVGWGLPVQSPQALVAMEKEEKESPFSSEEEEEDVPLDSDVEQALQTFAKTSGTMNNYPTWRRTLLRRAKEEEMKRFCKAQTIQRRLNEIEAALRELEAEGVKLELALRRQSSSPEQQKKLWVGQLLQLVDKKNSLVAEEAELMITVQELNLEEKQWQLDQELRGYMNREENLKTAADRQAEDQVLRKLVDLVNQRDALIRFQEERRLSELALGTGAQG.

Positions 1 to 489 (MASPTSTNPA…RDLYDVLAKE (489 aa)) are monooxygenase domain. Residues Cys-95, 114-116 (EKR), 121-123 (RHN), Phe-181, Tyr-293, and Asp-393 contribute to the FAD site. Position 475 is a phosphothreonine (Thr-475). The region spanning 508-612 (AGTQEELLRW…YLSHFHSAFK (105 aa)) is the Calponin-homology (CH) domain. Ser-617 carries the post-translational modification Phosphoserine. A disordered region spans residues 645 to 688 (SRAKENAEDAGGKKLRLEMEAETPSTEVPPDPEPGVPLTPPSQH). Residues 646-663 (RAKENAEDAGGKKLRLEM) are compositionally biased toward basic and acidic residues. Residues 646–666 (RAKENAEDAGGKKLRLEMEAE) adopt a coiled-coil conformation. Pro residues predominate over residues 671-684 (EVPPDPEPGVPLTP). Positions 695–757 (DLCALCGEHL…LQHLPQTDHK (63 aa)) constitute an LIM zinc-binding domain. 8 residues coordinate Zn(2+): Cys-697, Cys-700, His-718, Cys-721, Cys-724, Cys-727, Cys-747, and His-750. Positions 755–766 (DHKAEGSDRGPE) are enriched in basic and acidic residues. Disordered regions lie at residues 755-838 (DHKA…RSCS) and 867-886 (KEEK…VPLD). The segment covering 773–789 (PSENSMPPGLSTPTASQ) has biased composition (polar residues). A phosphoserine mark is found at Ser-872, Ser-875, and Ser-876. A compositionally biased stretch (acidic residues) spans 876 to 886 (SEEEEEDVPLD). Positions 901 to 1067 (GTMNNYPTWR…ELALGTGAQG (167 aa)) are important for interaction with RAB8A. The bMERB domain occupies 918–1067 (KEEEMKRFCK…ELALGTGAQG (150 aa)). 2 coiled-coil regions span residues 919–962 (EEEM…QSSS) and 999–1027 (NLEE…AADR). Ser-1057 carries the post-translational modification Phosphoserine.

This sequence belongs to the Mical family. As to quaternary structure, interacts with STK38 and STK38L. Interacts with RAB1B, RAB8A, RAB10, RAB13, RAB15 and RAB35 (in their GTP-bound forms); binding to RAB1B is of low affinity compared to other Rab proteins; at least in case of RAB8A and RAB10 can bind 2 molecules of the Rab proteins simultaneously; ternary complex formation of RAB8A, RAB13 and MICAL1 is possible. Associates with the SH3 domain of NEDD9. Interacts with VIM and PLXNA3. Interacts with GRAF1/ARHGAP26, GRAF2/ARHGAP10, RAB8A, RAB8B and RAB10; may bind simultaneously to GRAFs and Rabs and connects GRAFs to Rabs. Does not interact with RAB1 and RAB11A. Requires FAD as cofactor. In terms of tissue distribution, expressed in the thymus, lung, spleen, kidney, testis and hematopoietic cells.

It is found in the cytoplasm. It localises to the cytoskeleton. Its subcellular location is the endosome membrane. The protein resides in the midbody. The enzyme catalyses L-methionyl-[F-actin] + NADPH + O2 + H(+) = L-methionyl-(R)-S-oxide-[F-actin] + NADP(+) + H2O. The catalysed reaction is NADPH + O2 + H(+) = H2O2 + NADP(+). Monooxygenase that promotes depolymerization of F-actin by mediating oxidation of specific methionine residues on actin to form methionine-sulfoxide, resulting in actin filament disassembly and preventing repolymerization. In the absence of actin, it also functions as a NADPH oxidase producing H(2)O(2). Acts as a cytoskeletal regulator that connects NEDD9 to intermediate filaments. Also acts as a negative regulator of apoptosis via its interaction with STK38 and STK38L; acts by antagonizing STK38 and STK38L activation by MST1/STK4. Involved in regulation of lamina-specific connectivity in the nervous system such as the development of lamina-restricted hippocampal connections. Through redox regulation of the actin cytoskeleton controls the intracellular distribution of secretory vesicles containing L1/neurofascin/NgCAM family proteins in neurons, thereby regulating their cell surface levels. May act as Rab effector protein and play a role in vesicle trafficking. Promotes endosomal tubule extension by associating with RAB8 (RAB8A or RAB8B), RAB10 and GRAF (GRAF1/ARHGAP26 or GRAF2/ARHGAP10) on the endosomal membrane which may connect GRAFs to Rabs, thereby participating in neosynthesized Rab8-Rab10-Rab11-dependent protein export. This chain is [F-actin]-monooxygenase MICAL1 (MICAL1), found in Homo sapiens (Human).